Consider the following 246-residue polypeptide: Ribosomal RNA small subunit methyltransferase J (246 aa).

Residues 115 to 116 and D169 each bind S-adenosyl-L-methionine; that span reads ER.

It belongs to the methyltransferase superfamily. RsmJ family.

The protein resides in the cytoplasm. It carries out the reaction guanosine(1516) in 16S rRNA + S-adenosyl-L-methionine = N(2)-methylguanosine(1516) in 16S rRNA + S-adenosyl-L-homocysteine + H(+). Specifically methylates the guanosine in position 1516 of 16S rRNA. The polypeptide is Ribosomal RNA small subunit methyltransferase J (Buchnera aphidicola subsp. Acyrthosiphon pisum (strain 5A)).